The following is a 226-amino-acid chain: Large ribosomal subunit protein uL1 (226 aa).

Belongs to the universal ribosomal protein uL1 family. Part of the 50S ribosomal subunit.

Functionally, binds directly to 23S rRNA. The L1 stalk is quite mobile in the ribosome, and is involved in E site tRNA release. Protein L1 is also a translational repressor protein, it controls the translation of the L11 operon by binding to its mRNA. The protein is Large ribosomal subunit protein uL1 of Borreliella burgdorferi (strain ATCC 35210 / DSM 4680 / CIP 102532 / B31) (Borrelia burgdorferi).